A 745-amino-acid polypeptide reads, in one-letter code: Polyribonucleotide nucleotidyltransferase (745 aa).

Residues D487 and D493 each coordinate Mg(2+). Residues 554–613 (PRIETMQIPTDKIRDVIGTGGKIIREIVEKTGAKINIEDTGIVKIASSDGKAIKAAYNWI) enclose the KH domain. The region spanning 623–691 (GTIYDGTIVK…ERGKIRLSMK (69 aa)) is the S1 motif domain. The disordered stretch occupies residues 695–745 (QETGEDLTEKLKAERAERGEPEREERSDRGDRGDRGPRRDRGERRRESSGE). Residues 701 to 745 (LTEKLKAERAERGEPEREERSDRGDRGDRGPRRDRGERRRESSGE) show a composition bias toward basic and acidic residues.

This sequence belongs to the polyribonucleotide nucleotidyltransferase family. The cofactor is Mg(2+).

The protein resides in the cytoplasm. It catalyses the reaction RNA(n+1) + phosphate = RNA(n) + a ribonucleoside 5'-diphosphate. Functionally, involved in mRNA degradation. Catalyzes the phosphorolysis of single-stranded polyribonucleotides processively in the 3'- to 5'-direction. The protein is Polyribonucleotide nucleotidyltransferase of Methylorubrum extorquens (strain CM4 / NCIMB 13688) (Methylobacterium extorquens).